The chain runs to 252 residues: Small ribosomal subunit protein uS2A (252 aa).

S2 is subject to N-acetylserine. A disordered region spans residues E209 to W252. Residues A218–W252 are compositionally biased toward acidic residues.

Belongs to the universal ribosomal protein uS2 family. As to quaternary structure, component of the small ribosomal subunit. Mature ribosomes consist of a small (40S) and a large (60S) subunit. The 40S subunit contains about 33 different proteins and 1 molecule of RNA (18S). The 60S subunit contains about 49 different proteins and 3 molecules of RNA (25S, 5.8S and 5S). Interacts with RPS21.

It localises to the cytoplasm. Its function is as follows. Required for the assembly and/or stability of the 40S ribosomal subunit. Required for the processing of the 20S rRNA-precursor to mature 18S rRNA in a late step of the maturation of 40S ribosomal subunits. The sequence is that of Small ribosomal subunit protein uS2A from Saccharomyces cerevisiae (strain RM11-1a) (Baker's yeast).